Here is a 167-residue protein sequence, read N- to C-terminus: Cell division protein SepF (167 aa).

Residues 25–64 (EEDVAPVNNSTFQEKKHKKRSAVQRKQKNSDQEGDSVVPL) are disordered. Over residues 39–51 (KKHKKRSAVQRKQ) the composition is skewed to basic residues.

This sequence belongs to the SepF family. Homodimer. Interacts with FtsZ.

It is found in the cytoplasm. Cell division protein that is part of the divisome complex and is recruited early to the Z-ring. Probably stimulates Z-ring formation, perhaps through the cross-linking of FtsZ protofilaments. Its function overlaps with FtsA. This chain is Cell division protein SepF, found in Natranaerobius thermophilus (strain ATCC BAA-1301 / DSM 18059 / JW/NM-WN-LF).